Reading from the N-terminus, the 141-residue chain is MAKRGPKTVGVSYRLGLTPGVFMESLVKVADNSGATLAKVIGVPHYKAVWRRIPGAAVGDIVIVSIRAGKPELRKQVMRAIVIRQRRPYRRPDGSWIAFEDNAVVIITPEGEPKGTEIRGPLAKEAAERWPKLSAMASIIV.

The protein belongs to the universal ribosomal protein uL14 family. In terms of assembly, part of the 50S ribosomal subunit. Forms a cluster with proteins L3 and L24e, part of which may contact the 16S rRNA in 2 intersubunit bridges.

Functionally, binds to 23S rRNA. Forms part of two intersubunit bridges in the 70S ribosome. This Thermofilum pendens (strain DSM 2475 / Hrk 5) protein is Large ribosomal subunit protein uL14.